Reading from the N-terminus, the 156-residue chain is Transcription elongation factor GreA (156 aa).

Positions 2 to 27 (EKTFPMTKEGLDKLKAELENLKLVKR) form a coiled coil.

It belongs to the GreA/GreB family.

Necessary for efficient RNA polymerase transcription elongation past template-encoded arresting sites. The arresting sites in DNA have the property of trapping a certain fraction of elongating RNA polymerases that pass through, resulting in locked ternary complexes. Cleavage of the nascent transcript by cleavage factors such as GreA or GreB allows the resumption of elongation from the new 3'terminus. GreA releases sequences of 2 to 3 nucleotides. This chain is Transcription elongation factor GreA, found in Lactococcus lactis subsp. cremoris (strain MG1363).